Here is a 196-residue protein sequence, read N- to C-terminus: Large ribosomal subunit protein eL15 (196 aa).

Basic residues predominate over residues 69–98; it reads RKGGSRKQRHKAGRRSKRQGVNRLSRRKSI. 2 disordered regions span residues 69–100 and 161–196; these read RKGG…SIQR and FRGL…RQGK. The span at 186 to 196 shows a compositional bias: polar residues; sequence PSVTGNDRQGK.

It belongs to the eukaryotic ribosomal protein eL15 family.

This is Large ribosomal subunit protein eL15 from Halorubrum lacusprofundi (strain ATCC 49239 / DSM 5036 / JCM 8891 / ACAM 34).